The primary structure comprises 107 residues: Large ribosomal subunit protein uL24 (107 aa).

Belongs to the universal ribosomal protein uL24 family. As to quaternary structure, part of the 50S ribosomal subunit.

Functionally, one of two assembly initiator proteins, it binds directly to the 5'-end of the 23S rRNA, where it nucleates assembly of the 50S subunit. In terms of biological role, one of the proteins that surrounds the polypeptide exit tunnel on the outside of the subunit. This chain is Large ribosomal subunit protein uL24, found in Mesomycoplasma hyopneumoniae (strain J / ATCC 25934 / NCTC 10110) (Mycoplasma hyopneumoniae).